Here is a 417-residue protein sequence, read N- to C-terminus: NADH-quinone oxidoreductase subunit D (417 aa).

It belongs to the complex I 49 kDa subunit family. As to quaternary structure, NDH-1 is composed of 14 different subunits. Subunits NuoB, C, D, E, F, and G constitute the peripheral sector of the complex.

The protein resides in the cell inner membrane. The enzyme catalyses a quinone + NADH + 5 H(+)(in) = a quinol + NAD(+) + 4 H(+)(out). Its function is as follows. NDH-1 shuttles electrons from NADH, via FMN and iron-sulfur (Fe-S) centers, to quinones in the respiratory chain. The immediate electron acceptor for the enzyme in this species is believed to be ubiquinone. Couples the redox reaction to proton translocation (for every two electrons transferred, four hydrogen ions are translocated across the cytoplasmic membrane), and thus conserves the redox energy in a proton gradient. In Acidovorax sp. (strain JS42), this protein is NADH-quinone oxidoreductase subunit D.